The primary structure comprises 259 residues: Virion protein US10 homolog (259 aa).

The segment at 162–174 (CAHWCCLGHAFGC) is a zinc-finger region.

This sequence belongs to the herpesviridae US10 family. In terms of processing, phosphorylated.

Its subcellular location is the virion tegument. The protein resides in the host nucleus matrix. The sequence is that of Virion protein US10 homolog from Equine herpesvirus 4 (strain 1942) (EHV-4).